The chain runs to 1356 residues: MLSFVDNRILLLLAVTSLLASCQSGGLKGPRGAKGPRGDRGPQGPNGRDGKAGLPGIAGPPGPPGLGGNFAAQFDGGKGSDPGPGPMGLMGSRGPNGPPGAPGPQGFTGHAGEPGEPGQTGSIGARGPTGSAGKPGEDGNNGRPGKPGDRGGPGTQGARGFPGTPGLPGMKGHRGYNGLDGRKGESGTAGAKGETGAHGANGSPGPAGSRGLNGERGRAGPAGPAGARGADGSTGPAGPAGPLGAAGPPGFPGAPGPKGEIGGAGSNGPSGPQGGRGEPGINGAVGPVGPVGNPGNNGINGAKGAAGLPGVAGAPGFPGPRGGPGPQGPQGSTGARGLGGDPGPSGQKGDSGAKGEPGHSGVQGAAGPAGEEGKRGSTGEVGATGPAGLRGARGGAGTRGLPGLEGRGGPIGMPGARGATGPGGIRGAPGDAGRAGESGLTGARGLPGNSGQGGPPGKEGPPGAAGLDGRTGPPGPTGPRGQPGNIGFPGPKGPGGEAGKGGDKGPTGATGLRGGPGADGNNGAPGPAGVVGNTGEKGEQGPAGAPGFQGLPGPAGPAGEAGKAGNQGMPGDQGLPGPAGVKGERGNSGPAGSAGSQGAIGARGPAGTPGPDGGKGEPGSVGIVGAAGHQGPGGMPGERGAGGTPGPKGEKGEGGHRGLEGNMGRDGARGGPGPSGPPGPSGANGEKGESGSFGPAGPAGLRGPSGERGEGGPAGLPGFAGPPGSDGQSGPRGEKGPAGGKGDVGPAGPAGPSGQSGPSGASGPAGPPGGRGDAGPSGLTGFPGAAGRVGGPGPAGIAGPPGSAGPAGKDGPRGLRGDPGPGGPQGEQGVVGPAGISGDKGPSGESGPPGAPGTAGPQGVLGPSGFVGLPGSRGDKGLPGGPGAVGEPGRLGPAGASGPRGPAGNIGMPGMTGTQGEAGREGNSGNDGPPGRPGAAGFKGDRGEPGSPGALGSSGQPGPNGPAGSAGRPGNRGESGPTGNGGPVGAVGARGAPGPAGPRGEKGGAGEKGDRGMKGLRGHGGLQGMPGPNGPSGETGSAGITGPAGPRGPAGPHGPPGKDGRAGGHGAIGPVGHRGSPGHLGPAGPPGSPGLPGPAGPAGGGYDQSGGYDEYRADQPSFRAKDYEVDATIKSLNSQIENLLTPEGSKKNPARTCRDIRLSHPDWSSGFYWIDPNQGCIADAIKAYCDFSTGHTCIHPHPESIARKNWYRSSENKKHVWFGETINGGTEFAYNDETLSPQSMATQLAFMRLLANQATQNITYHCKNSVAYMDGENGNLKKAVLLQGSNDVELRAEGNSRFTFNVLEDGCTRHTGQWSKTVIEYRTNKPSRLPILDIAPLDIGEADQEFGLDIGPVCFK.

The first 22 residues, 1 to 22 (MLSFVDNRILLLLAVTSLLASC), serve as a signal peptide directing secretion. The segment at 22-1112 (CQSGGLKGPR…DQSGGYDEYR (1091 aa)) is disordered. A pyrrolidone carboxylic acid mark is found at Q23 and Q73. The propeptide at 23–72 (QSGGLKGPRGAKGPRGDRGPQGPNGRDGKAGLPGIAGPPGPPGLGGNFAA) is N-terminal propeptide. The span at 76-88 (GGKGSDPGPGPMG) shows a compositional bias: gly residues. K78 carries the post-translational modification Allysine. K171 carries the post-translational modification 5-hydroxylysine; alternate. The O-linked (Gal...) hydroxylysine; alternate glycan is linked to K171. The span at 219–248 (AGPAGPAGARGADGSTGPAGPAGPLGAAGP) shows a compositional bias: low complexity. Gly residues predominate over residues 259–280 (GEIGGAGSNGPSGPQGGRGEPG). The segment covering 281–315 (INGAVGPVGPVGNPGNNGINGAKGAAGLPGVAGAP) has biased composition (low complexity). A compositionally biased stretch (pro residues) spans 317–327 (FPGPRGGPGPQ). 4 stretches are compositionally biased toward gly residues: residues 334–343 (GARGLGGDPG), 391–412 (GARG…GPIG), 418–427 (GATGPGGIRG), and 448–457 (GNSGQGGPPG). Residues 479 to 489 (PRGQPGNIGFP) show a composition bias toward low complexity. The span at 511–520 (GLRGGPGADG) shows a compositional bias: gly residues. Composition is skewed to low complexity over residues 521–564 (NNGA…AGKA) and 587–603 (NSGP…IGAR). 2 stretches are compositionally biased toward gly residues: residues 610–619 (GPDGGKGEPG) and 628–646 (GHQG…GTPG). The segment covering 648 to 659 (KGEKGEGGHRGL) has biased composition (basic and acidic residues). Residues 716–731 (LPGFAGPPGSDGQSGP) are compositionally biased toward low complexity. Positions 736–745 (GPAGGKGDVG) are enriched in gly residues. Low complexity-rich tracts occupy residues 746 to 764 (PAGP…ASGP) and 776 to 786 (PSGLTGFPGAA). The segment covering 787 to 796 (GRVGGPGPAG) has biased composition (gly residues). Residues 797 to 809 (IAGPPGSAGPAGK) are compositionally biased toward low complexity. Positions 817-826 (GDPGPGGPQG) are enriched in gly residues. Positions 827–858 (EQGVVGPAGISGDKGPSGESGPPGAPGTAGPQ) are enriched in low complexity. Residues 877 to 886 (GLPGGPGAVG) show a composition bias toward gly residues. Positions 888 to 903 (PGRLGPAGASGPRGPA) are enriched in low complexity. Over residues 976-985 (GPTGNGGPVG) the composition is skewed to gly residues. A compositionally biased stretch (basic and acidic residues) spans 999 to 1013 (RGEKGGAGEKGDRGM). Positions 1083–1095 (AGPPGSPGLPGPA) are enriched in pro residues. Residues 1114–1356 (DQPSFRAKDY…GLDIGPVCFK (243 aa)) constitute a propeptide, C-terminal propeptide. The region spanning 1123–1356 (YEVDATIKSL…GLDIGPVCFK (234 aa)) is the Fibrillar collagen NC1 domain. Intrachain disulfides connect C1153/C1185, C1193/C1354, and C1262/C1307. D1171, N1173, Q1174, C1176, and D1179 together coordinate Ca(2+). A glycan (N-linked (GlcNAc...) asparagine) is linked at N1257.

The protein belongs to the fibrillar collagen family. Trimers of one alpha 2(I) and two alpha 1(I) chains. Post-translationally, prolines at the third position of the tripeptide repeating unit (G-X-Y) are hydroxylated in some or all of the chains. Forms the fibrils of tendon, ligaments and bones. In bones the fibrils are mineralized with calcium hydroxyapatite.

The protein localises to the secreted. It is found in the extracellular space. It localises to the extracellular matrix. Type I collagen is a member of group I collagen (fibrillar forming collagen). In Oncorhynchus mykiss (Rainbow trout), this protein is Collagen alpha-2(I) chain (col1a2).